A 1088-amino-acid chain; its full sequence is Platelet-derived growth factor receptor alpha (1088 aa).

An N-terminal signal peptide occupies residues 1–23 (MGTSQAFLVLSCLLTGPSLIVCQ). 5 consecutive Ig-like C2-type domains span residues 24–112 (LLLP…SEIE), 116–200 (IYIY…FKTS), 201–305 (EFNV…KTVT), 318–409 (PTFG…FELS), and 413–516 (PASI…LKLV). Topologically, residues 24–527 (LLLPSILPNE…PSLRSELTVA (504 aa)) are extracellular. Cys48 and Cys99 form a disulfide bridge. Residues Asn75, Asn102, and Asn178 are each glycosylated (N-linked (GlcNAc...) asparagine). 2 cysteine pairs are disulfide-bonded: Cys149–Cys188 and Cys234–Cys289. N-linked (GlcNAc...) asparagine glycosylation is found at Asn352, Asn358, Asn457, and Asn467. Residues Cys434 and Cys500 are joined by a disulfide bond. A helical membrane pass occupies residues 528–548 (AAVLVLLVIVIVSLIVLVVIW). At 549 to 1088 (KQKPRYEIRW…SSDLVEDSFL (540 aa)) the chain is on the cytoplasmic side. Phosphotyrosine; by autocatalysis occurs at positions 571 and 573. Positions 592 to 953 (LVLGRILGSG…HLSEIVENLL (362 aa)) constitute a Protein kinase domain. Residues 598-606 (LGSGAFGKV) and Lys626 contribute to the ATP site. Tyr719, Tyr730, Tyr741, Tyr753, Tyr761, and Tyr767 each carry phosphotyrosine; by autocatalysis. Residue Asp817 is the Proton acceptor of the active site. Phosphotyrosine; by autocatalysis occurs at positions 848, 987, and 1017. A disordered region spans residues 1017–1088 (YIIPLPDIDP…SSDLVEDSFL (72 aa)). Over residues 1040-1058 (SSQTSEESAIETGSSSSTF) the composition is skewed to polar residues. Acidic residues predominate over residues 1064-1088 (ETIEDIDMMDDIGIDSSDLVEDSFL).

The protein belongs to the protein kinase superfamily. Tyr protein kinase family. CSF-1/PDGF receptor subfamily. As to quaternary structure, interacts with homodimeric PDGFA, PDGFB and PDGFC, and with heterodimers formed by PDGFA and PDGFB. Monomer in the absence of bound ligand. Interaction with dimeric PDGFA, PDGFB and/or PDGFC leads to receptor dimerization, where both PDGFRA homodimers and heterodimers with PDGFRB are observed. Interacts (tyrosine phosphorylated) with SHB (via SH2 domain). Interacts (tyrosine phosphorylated) with SHF (via SH2 domain). Interacts (tyrosine phosphorylated) with SRC (via SH2 domain). Interacts (tyrosine phosphorylated) with PIK3R1. Interacts (tyrosine phosphorylated) with PLCG1 (via SH2 domain). Interacts (tyrosine phosphorylated) with CRK, GRB2 and GRB7. Interacts with CD248; this interaction promotes PDGF receptor signaling pathway. Post-translationally, ubiquitinated, leading to its internalization and degradation. In terms of processing, autophosphorylated on tyrosine residues upon ligand binding. Autophosphorylation occurs in trans, i.e. one subunit of the dimeric receptor phosphorylates tyrosine residues on the other subunit. Phosphorylation at Tyr-730 and Tyr-741 is important for interaction with PIK3R1. Phosphorylation at Tyr-719 and Tyr-753 is important for interaction with PTPN11. Phosphorylation at Tyr-761 is important for interaction with CRK. Phosphorylation at Tyr-571 and Tyr-573 is important for interaction with SRC and SRC family members. Phosphorylation at Tyr-987 and Tyr-1017 is important for interaction with PLCG1.

The protein resides in the cell membrane. Its subcellular location is the cell projection. The protein localises to the cilium. It is found in the golgi apparatus. It carries out the reaction L-tyrosyl-[protein] + ATP = O-phospho-L-tyrosyl-[protein] + ADP + H(+). With respect to regulation, present in an inactive conformation in the absence of bound ligand. Binding of PDGFA and/or PDGFB leads to dimerization and activation by autophosphorylation on tyrosine residues. Inhibited by imatinib, nilotinib and sorafenib. Functionally, tyrosine-protein kinase that acts as a cell-surface receptor for PDGFA, PDGFB and PDGFC and plays an essential role in the regulation of embryonic development, cell proliferation, survival and chemotaxis. Depending on the context, promotes or inhibits cell proliferation and cell migration. Plays an important role in the differentiation of bone marrow-derived mesenchymal stem cells. Required for normal skeleton development and cephalic closure during embryonic development. Required for normal development of the mucosa lining the gastrointestinal tract, and for recruitment of mesenchymal cells and normal development of intestinal villi. Plays a role in cell migration and chemotaxis in wound healing. Plays a role in platelet activation, secretion of agonists from platelet granules, and in thrombin-induced platelet aggregation. Binding of its cognate ligands - homodimeric PDGFA, homodimeric PDGFB, heterodimers formed by PDGFA and PDGFB or homodimeric PDGFC -leads to the activation of several signaling cascades; the response depends on the nature of the bound ligand and is modulated by the formation of heterodimers between PDGFRA and PDGFRB. Phosphorylates PIK3R1, PLCG1, and PTPN11. Activation of PLCG1 leads to the production of the cellular signaling molecules diacylglycerol and inositol 1,4,5-trisphosphate, mobilization of cytosolic Ca(2+) and the activation of protein kinase C. Phosphorylates PIK3R1, the regulatory subunit of phosphatidylinositol 3-kinase, and thereby mediates activation of the AKT1 signaling pathway. Mediates activation of HRAS and of the MAP kinases MAPK1/ERK2 and/or MAPK3/ERK1. Promotes activation of STAT family members STAT1, STAT3 and STAT5A and/or STAT5B. Receptor signaling is down-regulated by protein phosphatases that dephosphorylate the receptor and its down-stream effectors, and by rapid internalization of the activated receptor. The sequence is that of Platelet-derived growth factor receptor alpha (Pdgfra) from Rattus norvegicus (Rat).